A 115-amino-acid chain; its full sequence is Glutaredoxin 4 (115 aa).

Positions 5–107 constitute a Glutaredoxin domain; that stretch reads IEKIQRQIAE…QLIKETAAKY (103 aa). Lys-22 contributes to the glutathione binding site. Position 30 (Cys-30) interacts with [2Fe-2S] cluster. Residues Arg-59, Phe-71, and 84-85 contribute to the glutathione site; that span reads CD.

Belongs to the glutaredoxin family. Monothiol subfamily. Homodimer.

It localises to the cytoplasm. In terms of biological role, monothiol glutaredoxin involved in the biogenesis of iron-sulfur clusters. The chain is Glutaredoxin 4 (grxD) from Shigella flexneri.